The sequence spans 81 residues: Trefoil factor 3 (81 aa).

A signal peptide spans 1–23 (MEARTFWLLVVAVLALGSSSSTG). Positions 31–74 (NQCAVPAKDRVDCGYPEVTPEQCNNRGCCFDSSIHGVPWCFKPL) constitute a P-type domain. Intrachain disulfides connect C33–C59, C43–C58, and C53–C70.

In terms of assembly, monomer. Homodimer; disulfide-linked.

It localises to the secreted. The protein resides in the extracellular space. The protein localises to the extracellular matrix. It is found in the cytoplasm. Functionally, involved in the maintenance and repair of the intestinal mucosa. Promotes the mobility of epithelial cells in healing processes (motogen). In Bos taurus (Bovine), this protein is Trefoil factor 3 (TFF3).